A 67-amino-acid polypeptide reads, in one-letter code: Large ribosomal subunit protein bL35 (67 aa).

This sequence belongs to the bacterial ribosomal protein bL35 family.

This is Large ribosomal subunit protein bL35 from Rickettsia prowazekii (strain Madrid E).